The primary structure comprises 793 residues: Protein smoothened (793 aa).

The signal sequence occupies residues 1–30 (MAAGRPVRGPELAPRRLLQLLLLVLLGGRG). Residues 31-237 (RGAALSGNVT…EAEHQDMHSY (207 aa)) are Extracellular-facing. Residues 35-61 (LSGNVTGPGPRSAGGSARRNAPVTSPP) are disordered. N-linked (GlcNAc...) asparagine glycosylation is present at asparagine 38. Intrachain disulfides connect cysteine 68–cysteine 182, cysteine 74–cysteine 138, cysteine 82–cysteine 131, cysteine 122–cysteine 158, and cysteine 151–cysteine 173. Residues 69 to 185 (GRAAHCEPLR…DHFPEGCPNE (117 aa)) enclose the FZ domain. A cholesterol-binding site is contributed by aspartate 99. Asparagine 192 carries an N-linked (GlcNAc...) asparagine glycan. 3 disulfide bridges follow: cysteine 197/cysteine 217, cysteine 221/cysteine 299, and cysteine 318/cysteine 394. Residues 238–258 (IAAFGAVTGLCTLFTLATFVA) traverse the membrane as a helical segment. Residues 259–266 (DWRNSNRY) lie on the Cytoplasmic side of the membrane. A helical membrane pass occupies residues 267-287 (PAVILFYVNACFFVGSIGWLA). Residues 288 to 318 (QFMDGARREIVCRADGTMRFGEPTSSETLSC) are Extracellular-facing. Residues 319–339 (VIIFVIVYYALMAGVVWFVVL) traverse the membrane as a helical segment. The Cytoplasmic segment spans residues 340–362 (TYAWHTSFKALGTTYQPLSGKTS). Residues 363-383 (YFHLLTWSLPFVLTVAILAVA) traverse the membrane as a helical segment. Over 384–406 (QVDGDSVSGICFVGYKNYRYRAG) the chain is Extracellular. Tyrosine 398 lines the cholesterol pocket. The chain crosses the membrane as a helical span at residues 407–427 (FVLAPIGLVLIVGGYFLIRGV). Residues 428–455 (MTLFSIKSNHPGLLSEKAASKINETMLR) lie on the Cytoplasmic side of the membrane. Residues 456–476 (LGIFGFLAFGFVLITFSCHFY) form a helical membrane-spanning segment. At 477–528 (DFFNQAEWERSFRDYVLCQANVTIGLPTKKPIPDCEIKNRPSLLVEKINLFA) the chain is on the extracellular side. A disulfide bridge connects residues cysteine 494 and cysteine 511. The N-linked (GlcNAc...) asparagine glycan is linked to asparagine 497. Residues 529 to 549 (MFGTGIAMSTWVWTKATLLIW) traverse the membrane as a helical segment. An interaction with BBS5 and BBS7 region spans residues 542–573 (TKATLLIWRRTWCRLTGHSDDEPKRIKKSKMI). Topologically, residues 550-793 (RRTWCRLTGH…AELLDADSDF (244 aa)) are cytoplasmic. Serine 560, serine 578, and serine 594 each carry phosphoserine. The segment at 574 to 657 (AKAFSKRREL…TPVPPEEQAN (84 aa)) is required for interaction with PRKACA. The interval 585 to 597 (QNPGQELSFSMHT) is interaction with DLG5. Threonine 597 carries the post-translational modification Phosphothreonine. Serine 599 and serine 642 each carry phosphoserine. 2 positions are modified to phosphothreonine: threonine 644 and threonine 648. At serine 666 the chain carries Phosphoserine. Over residues 674–684 (GRKKKRRKRKK) the composition is skewed to basic residues. The segment at 674–702 (GRKKKRRKRKKEVCPLGPAPELHHSAPVP) is disordered.

Belongs to the G-protein coupled receptor Fz/Smo family. Homodimer. Interacts (via C-terminus) with protein kinase A catalytic subunit PRKACA; interacts with free PRKACA subunits and the interaction leads to sequestration of PRKACA at the membrane, preventing PRKACA-mediated phosphorylation of GLI transcription factors. Interacts with ARRB2. Interacts with KIF7. Interacts with BBS5 and BBS7; the interactions are indicative for the association of SMO with the BBsome complex to facilitate ciliary localization of SMO. Interacts with DLG5 and SDCBP. Interacts with GAS8/DRC4. Post-translationally, phosphorylation by GRK kinases is required for interaction with protein kinase A catalytic subunit PRKACA. In terms of tissue distribution, in embryo, found in the early neural folds and neural tube, pre-somitic mesoderm and somites, developing limb bud, gut, eye, testes, cartilage, muscle, lung, epiglottis, thymus, tongue, jaw, taste buds, teeth, and skin. In adult, found in multiple tissues including heart, brain, liver, lung, skeletal muscle, kidney and testis.

It is found in the cell membrane. The protein resides in the cell projection. It localises to the cilium. Functionally, g protein-coupled receptor which associates with the patched protein (PTCH) to transduce hedgehog protein signaling. Binding of sonic hedgehog (SHH) to its receptor patched prevents inhibition of smoothened (SMO) by patched. When active, SMO binds to and sequesters protein kinase A catalytic subunit PRKACA at the cell membrane, preventing PRKACA-mediated phosphorylation of GLI transcription factors which releases the GLI proteins from PRKACA-mediated inhibition and allows for transcriptional activation of hedgehog pathway target genes. Required for the accumulation of KIF7, GLI2 and GLI3 in the cilia. Interacts with DLG5 at the ciliary base to induce the accumulation of KIF7 and GLI2 at the ciliary tip for GLI2 activation. This is Protein smoothened (Smo) from Rattus norvegicus (Rat).